The following is a 319-amino-acid chain: MSLNFLDFEQPIAELEAKIDSLNALSRQDEKLDINIDEEVQRLREKSVELTRKIFADLGAWQIAQLARHPRRPYTLDYIQHIFTDFDELAGDRAYADDKAIVGGMARLDGRPVMVIGHQKGRETKEKIRRNFGMPAPEGYRKALRLMEMAERFNLPIVTFIDTPGAYPGVGAEERGQSEAIARNLREMSGLKVPVICTVIGEGGSGGALAIGVGDKVNMLQYSTYSVISPEGCASILWKSADKAPLAAEAMGITAPRLQELKLIDSVIPEPLGGAHRDPQAVAASLKTQLLADLEDLDTLEKEELLDRRYQRLMNYGYC.

The 262-residue stretch at 35–296 (NIDEEVQRLR…KTQLLADLED (262 aa)) folds into the CoA carboxyltransferase C-terminal domain.

It belongs to the AccA family. In terms of assembly, acetyl-CoA carboxylase is a heterohexamer composed of biotin carboxyl carrier protein (AccB), biotin carboxylase (AccC) and two subunits each of ACCase subunit alpha (AccA) and ACCase subunit beta (AccD).

It is found in the cytoplasm. The catalysed reaction is N(6)-carboxybiotinyl-L-lysyl-[protein] + acetyl-CoA = N(6)-biotinyl-L-lysyl-[protein] + malonyl-CoA. It functions in the pathway lipid metabolism; malonyl-CoA biosynthesis; malonyl-CoA from acetyl-CoA: step 1/1. Functionally, component of the acetyl coenzyme A carboxylase (ACC) complex. First, biotin carboxylase catalyzes the carboxylation of biotin on its carrier protein (BCCP) and then the CO(2) group is transferred by the carboxyltransferase to acetyl-CoA to form malonyl-CoA. This chain is Acetyl-coenzyme A carboxylase carboxyl transferase subunit alpha, found in Edwardsiella ictaluri (strain 93-146).